Reading from the N-terminus, the 732-residue chain is Bromodomain-containing factor 1 (732 aa).

Residues 1–22 (MSETFPETNTPVQTPSTESFVN) are compositionally biased toward polar residues. Disordered stretches follow at residues 1-207 (MSET…NLPE), 324-380 (TNVA…ETKP), 491-517 (NKPVPEPTPQNSDVSDREYSSEEEDNV), 556-600 (REQQ…TPPQ), and 700-732 (VNGQQGSDNGFMKVVNQEESSEDEASSESSEEE). Low complexity predominate over residues 37 to 51 (SQDSDSNQQSSHQEP). The span at 89–100 (ASQTGVIQTEVS) shows a compositional bias: polar residues. Positions 137–147 (EAPEENPQEEV) are enriched in acidic residues. The Bromo 1 domain occupies 206 to 315 (PENPIPQHQA…AQFEKLMVKV (110 aa)). Residues 327-338 (AEATSVATSPTT) are compositionally biased toward polar residues. A compositionally biased stretch (basic and acidic residues) spans 370-380 (KSKELPYETKP). The Bromo 2 domain occupies 383–492 (KKVAAELRFC…AVFDKKWANK (110 aa)). A coiled-coil region spans residues 529–569 (AIQVMENQIIRMRKELDELKKEHLKKLREQQAARKKKKQQK). The segment covering 561 to 579 (ARKKKKQQKGKRRAPKAKH) has biased composition (basic residues). The segment covering 590–600 (PPEPPKLTPPQ) has biased composition (pro residues). Residues 593 to 672 (PPKLTPPQPV…GDKALKNSAG (80 aa)) form the NET domain. Residues 718–732 (ESSEDEASSESSEEE) show a composition bias toward acidic residues.

This sequence belongs to the BET family.

The protein resides in the nucleus. Transcription factor involved in the expression of a broad class of genes including snRNAs. Required for sporulation and DNA-damage repair. Prevents the spreading of SIR silencing at telomeres and protects histone H4, but not H3, from deacetylation. The chain is Bromodomain-containing factor 1 (BDF1) from Candida albicans (strain SC5314 / ATCC MYA-2876) (Yeast).